The primary structure comprises 207 residues: Outer-membrane lipoprotein LolB (207 aa).

A signal peptide spans 1–21; it reads MPLPDFRFIRLLPLAALVLTA. Cysteine 22 carries the N-palmitoyl cysteine lipid modification. The S-diacylglycerol cysteine moiety is linked to residue cysteine 22.

It belongs to the LolB family. Monomer.

It is found in the cell outer membrane. Plays a critical role in the incorporation of lipoproteins in the outer membrane after they are released by the LolA protein. The sequence is that of Outer-membrane lipoprotein LolB from Escherichia coli O6:K15:H31 (strain 536 / UPEC).